We begin with the raw amino-acid sequence, 408 residues long: 5-hydroxytryptamine receptor 1A (408 aa).

Residues 1–32 (MDASNNTTSWNILQRGRMGPSWRRCPVSYQII) are Extracellular-facing. 2 N-linked (GlcNAc...) asparagine glycosylation sites follow: Asn-5 and Asn-6. The helical transmembrane segment at 33–53 (ASLFLGRSFSAGIFGNACVIA) threads the bilayer. Residues 54-67 (AIALERSLQNVANY) are Cytoplasmic-facing. A helical membrane pass occupies residues 68-92 (LIGSLAVTDLMVSVLVLPMAAQNQV). At 93–101 (LNKWTLGQV) the chain is on the extracellular side. A helical transmembrane segment spans residues 102–126 (TCDIFISLDVLCCTSSILHLCAIAL). A disulfide bridge links Cys-103 with Cys-181. Serotonin is bound by residues Asp-110 and Cys-114. The DRY motif; important for ligand-induced conformation changes motif lies at 127–129 (DRY). The Cytoplasmic portion of the chain corresponds to 127 to 146 (DRYWAITDPIDYVNKRTPRR). The chain crosses the membrane as a helical span at residues 147–168 (AAVLISITWIVGFSISIPPMLG). The Extracellular portion of the chain corresponds to 169–187 (WRTPEDRSDPNACRISEDP). The chain crosses the membrane as a helical span at residues 188 to 210 (GYTIYSTFGAFYIPLILMLVLYG). The Cytoplasmic portion of the chain corresponds to 211 to 333 (KIFKAARFRI…LARERKTVKT (123 aa)). The disordered stretch occupies residues 235–255 (TCLSVSQQSPKEKQRGAQQEL). Residues Lys-332, Thr-333, and Gly-339 each coordinate 1D-myo-inositol 4-phosphate. A helical transmembrane segment spans residues 334 to 357 (LGIIMGTFILCWLPFFIVALVLPF). Over 358–364 (CETCHMP) the chain is Extracellular. The chain crosses the membrane as a helical span at residues 365–389 (HLLFDIITWLGYSNSLLNPIIYAYF). The short motif at 382–386 (NPIIY) is the NPxxY motif; important for ligand-induced conformation changes and signaling element. Residues Phe-389, Asn-390, and Lys-391 each contribute to the 1D-myo-inositol 4-phosphate site. Residues 390 to 408 (NKDFQSAFKKIIKCKFCRQ) lie on the Cytoplasmic side of the membrane.

Belongs to the G-protein coupled receptor 1 family. 5-hydroxytryptamine receptor subfamily. HTR1A sub-subfamily. As to expression, first expressed in the rostral part of the brain stem at stage 22. At later stages of development, expression is localized to serotonergic neurons. The expression pattern changes in the tadpole of stage 41 where, in addition to serotonergic neurons, expression is also localized to the inner nuclear layer (INL) of the developing retina. This expression pattern continues through to the start of metamorphosis (stage 46). In adults, expressed in the brain, in particular the telencephalon, diencephalon and mesencephalon. In the telencephalic region, expression is localized to the lateral, dorsal and medial pallium, and in the striatum, septum and amygdala. In the mesencephalic region, expression is strongest in the optic tectum and torus semicircularis with moderate levels of expression in tegmental nuclei. In diencephalon, localized to the dorsal and ventral thalamus and the preoptic area of the hypothalamus.

It localises to the cell membrane. Its activity is regulated as follows. G-protein coupled receptor activity is regulated by lipids: phosphatidylinositol 4-phosphate increases HTR1A-mediated activity. Its function is as follows. G-protein coupled receptor for 5-hydroxytryptamine (serotonin). Also functions as a receptor for various drugs and psychoactive substances. Ligand binding causes a conformation change that triggers signaling via guanine nucleotide-binding proteins (G proteins) and modulates the activity of downstream effectors, such as adenylate cyclase. HTR1A is coupled to G(i)/G(o) G alpha proteins and mediates inhibitory neurotransmission: signaling inhibits adenylate cyclase activity and activates a phosphatidylinositol-calcium second messenger system that regulates the release of Ca(2+) ions from intracellular stores. Beta-arrestin family members regulate signaling by mediating both receptor desensitization and resensitization processes. Activation of the receptor may play a role in the exit from G0 phase and in promoting DNA synthesis. This chain is 5-hydroxytryptamine receptor 1A, found in Xenopus laevis (African clawed frog).